We begin with the raw amino-acid sequence, 154 residues long: Myoglobin (154 aa).

Residues 2–148 (GLSDGEWHLV…FRNDIAAKIK (147 aa)) enclose the Globin domain. The residue at position 4 (Ser-4) is a Phosphoserine. His-65 is a binding site for nitrite. His-65 serves as a coordination point for O2. Position 68 is a phosphothreonine (Thr-68). His-94 contacts heme b.

It belongs to the globin family. As to quaternary structure, monomeric.

Its subcellular location is the cytoplasm. The protein resides in the sarcoplasm. It catalyses the reaction Fe(III)-heme b-[protein] + nitric oxide + H2O = Fe(II)-heme b-[protein] + nitrite + 2 H(+). The catalysed reaction is H2O2 + AH2 = A + 2 H2O. In terms of biological role, monomeric heme protein which primary function is to store oxygen and facilitate its diffusion within muscle tissues. Reversibly binds oxygen through a pentacoordinated heme iron and enables its timely and efficient release as needed during periods of heightened demand. Depending on the oxidative conditions of tissues and cells, and in addition to its ability to bind oxygen, it also has a nitrite reductase activity whereby it regulates the production of bioactive nitric oxide. Under stress conditions, like hypoxia and anoxia, it also protects cells against reactive oxygen species thanks to its pseudoperoxidase activity. The chain is Myoglobin (MB) from Pusa sibirica (Baikal seal).